The chain runs to 385 residues: Hsp70/Hsp90 co-chaperone CNS1 (385 aa).

A disordered region spans residues Met-1–Ser-37. TPR repeat units follow at residues Ala-83 to Asp-116, Glu-121 to Asn-154, and Val-155 to Asn-189.

Belongs to the TTC4 family. Monomer. Component of Hsp70 and Hsp90 chaperone complexes. Interacts (via TPR repeats) with HSC82 and HSP82 (via C-terminal MEEVD pentapeptide). Interacts with CPR7, SSA1 and SPI1.

The protein resides in the cytoplasm. Co-chaperone that binds to the molecular chaperones Hsp90 (HSC82 and HSP82) and Hsp70 (SSA1). Stimulates SSA1 ATPase activity, but not Hsp90 ATPase activity. Involved in only a subset of Hsp90 functions. This chain is Hsp70/Hsp90 co-chaperone CNS1 (CNS1), found in Saccharomyces cerevisiae (strain ATCC 204508 / S288c) (Baker's yeast).